The chain runs to 56 residues: Ovomucoid (56 aa).

The Kazal-like domain maps to 6 to 56; sequence VDCSDHPKPACLQEQKPLCGSDNKTYDNKCSFCNAVVDSNGTLTLSHFGKC. 3 disulfides stabilise this stretch: cysteine 8-cysteine 38, cysteine 16-cysteine 35, and cysteine 24-cysteine 56. A glycan (N-linked (GlcNAc...) asparagine) is linked at asparagine 45.

The protein resides in the secreted. This chain is Ovomucoid, found in Pipile pipile (Trinidad piping guan).